We begin with the raw amino-acid sequence, 934 residues long: Protocadherin gamma-C3 (934 aa).

Residues 1 to 31 (MVPEAWRSGLVSTGRVVGVLLLLGALNKAST) form the signal peptide. Cadherin domains are found at residues 32–135 (VIHY…NPAF), 136–244 (PTQE…APVF), 245–352 (NQSL…APEI), 353–457 (TVTS…PPQS), 458–567 (SQSS…APQV), and 572–685 (PGGS…APRE). The Extracellular segment spans residues 32 to 693 (VIHYEIPEER…REQNKNLTFY (662 aa)). Residues Asn245, Asn424, Asn478, Asn550, Asn615, and Asn689 are each glycosylated (N-linked (GlcNAc...) asparagine). A helical membrane pass occupies residues 694–714 (LLLSLILVSVGFVVTVFGVII). Residues 715–934 (FKVYKWKQSR…KKKSGKKEKK (220 aa)) lie on the Cytoplasmic side of the membrane. Disordered regions lie at residues 804–843 (ESAPPGQQAPPNTDWRFSQAQRPGTSGSQNGDDTGTWPNN) and 904–934 (ATLTNAAGKRDGKAPAGGNGNKKKSGKKEKK). Residues 812–843 (APPNTDWRFSQAQRPGTSGSQNGDDTGTWPNN) show a composition bias toward polar residues. Residues 924-934 (NKKKSGKKEKK) are compositionally biased toward basic residues.

It is found in the cell membrane. Its function is as follows. Potential calcium-dependent cell-adhesion protein. May be involved in the establishment and maintenance of specific neuronal connections in the brain. This Pan troglodytes (Chimpanzee) protein is Protocadherin gamma-C3 (PCDHGC3).